The following is a 72-amino-acid chain: Dermaseptin AA-3-4 (72 aa).

Positions 1–22 are cleaved as a signal peptide; the sequence is MAFLKKSLFLVLFLGLVSLSIC. A propeptide spanning residues 23-43 is cleaved from the precursor; that stretch reads DEEKRENEDEEEQEDDEQSEE. Positions 24–45 are disordered; sequence EEKRENEDEEEQEDDEQSEEKR. Positions 30–41 are enriched in acidic residues; it reads EDEEEQEDDEQS.

The protein belongs to the frog skin active peptide (FSAP) family. Expressed by the skin glands.

It is found in the secreted. Its function is as follows. Possesses a potent antimicrobial activity against Gram-positive and Gram-negative bacteria. Probably acts by disturbing membrane functions with its amphipathic structure. The protein is Dermaseptin AA-3-4 of Agalychnis annae (Blue-sided leaf frog).